Here is a 1013-residue protein sequence, read N- to C-terminus: Tolloid-like protein 1 (1013 aa).

The signal sequence occupies residues 1–30 (MGLGTLSPRMLVWLVASGIVFYGELWVCAG). Residues 31 to 147 (LDYDYTFDGN…GQNEKNRVPR (117 aa)) constitute a propeptide that is removed on maturation. The 200-residue stretch at 148-347 (AATSRTERIW…AQARKLYRCP (200 aa)) folds into the Peptidase M12A domain. An N-linked (GlcNAc...) asparagine glycan is attached at Asn-169. 4 disulfide bridges follow: Cys-190–Cys-346, Cys-210–Cys-232, Cys-212–Cys-213, and Cys-349–Cys-375. His-240 lines the Zn(2+) pocket. Residue Glu-241 is part of the active site. Positions 244 and 250 each coordinate Zn(2+). 2 consecutive CUB domains span residues 349 to 461 (CGET…YEAI) and 462 to 574 (CGGE…FFKE). Residues Asn-359 and Asn-390 are each glycosylated (N-linked (GlcNAc...) asparagine). Cystine bridges form between Cys-402–Cys-424, Cys-462–Cys-488, Cys-515–Cys-537, Cys-578–Cys-590, Cys-586–Cys-599, Cys-601–Cys-614, Cys-618–Cys-644, Cys-671–Cys-693, Cys-734–Cys-745, Cys-741–Cys-754, Cys-756–Cys-769, Cys-774–Cys-800, Cys-827–Cys-849, Cys-887–Cys-917, and Cys-944–Cys-966. In terms of domain architecture, EGF-like 1; calcium-binding spans 574–615 (EEDECAKPDRGGCEQRCLNTLGSYQCACEPGYELGPDRRSCE). The CUB 3 domain occupies 618–730 (CGGLLTKLNG…KGFKAHFFSD (113 aa)). N-linked (GlcNAc...) asparagine glycosylation is present at Asn-626. One can recognise an EGF-like 2; calcium-binding domain in the interval 730–770 (DKDECSKDNGGCQHECVNTMGSYMCQCRNGFVLHDNKHDCK). 2 CUB domains span residues 774–886 (CEQK…HSTE) and 887–1003 (CGGR…YKSI).

It depends on Zn(2+) as a cofactor.

Its subcellular location is the secreted. Protease which processes procollagen C-propeptides, such as chordin, pro-biglycan and pro-lysyl oxidase. Required for the embryonic development. Predominant protease, which in the development, influences dorsal-ventral patterning and skeletogenesis. This Homo sapiens (Human) protein is Tolloid-like protein 1 (TLL1).